The following is a 417-amino-acid chain: Gamma-glutamyl phosphate reductase (417 aa).

Belongs to the gamma-glutamyl phosphate reductase family.

It is found in the cytoplasm. It carries out the reaction L-glutamate 5-semialdehyde + phosphate + NADP(+) = L-glutamyl 5-phosphate + NADPH + H(+). It functions in the pathway amino-acid biosynthesis; L-proline biosynthesis; L-glutamate 5-semialdehyde from L-glutamate: step 2/2. Catalyzes the NADPH-dependent reduction of L-glutamate 5-phosphate into L-glutamate 5-semialdehyde and phosphate. The product spontaneously undergoes cyclization to form 1-pyrroline-5-carboxylate. This is Gamma-glutamyl phosphate reductase from Hydrogenovibrio crunogenus (strain DSM 25203 / XCL-2) (Thiomicrospira crunogena).